The sequence spans 199 residues: Large ribosomal subunit protein uL18 (199 aa).

This sequence belongs to the universal ribosomal protein uL18 family. In terms of assembly, part of the 50S ribosomal subunit. Contacts the 5S and 23S rRNAs.

In terms of biological role, this is one of the proteins that bind and probably mediate the attachment of the 5S RNA into the large ribosomal subunit, where it forms part of the central protuberance. The chain is Large ribosomal subunit protein uL18 from Saccharolobus solfataricus (strain ATCC 35092 / DSM 1617 / JCM 11322 / P2) (Sulfolobus solfataricus).